The primary structure comprises 852 residues: Protein Shroom1 (852 aa).

Position 1 is an N-acetylmethionine (Met1). Ser18 is subject to Phosphoserine. Disordered regions lie at residues 34-54, 81-109, and 125-218; these read SSFS…GTDL, TSPR…PLNR, and AAQA…ANQQ. Thr103 carries the post-translational modification Phosphothreonine. Over residues 125-144 the composition is skewed to low complexity; it reads AAQAAEPPSPPASRAAYRQR. Phosphoserine is present on residues Ser133 and Ser137. Residues 145–233 form the ASD1 domain; it reads LQGAQRRVLR…SEPGKLDRVG (89 aa). Basic and acidic residues predominate over residues 152-164; the sequence is VLRETSFQRKELR. Phosphoserine occurs at positions 166, 190, and 224. Disordered stretches follow at residues 276 to 320, 399 to 431, 464 to 496, and 823 to 852; these read LPET…GSGG, MRSP…QRTG, SRPT…TAAE, and DLGH…LLLT. The span at 279-289 shows a compositional bias: polar residues; that stretch reads TQPQGSMNLDS. Residues 301-313 show a composition bias toward low complexity; the sequence is ASRSRSASGEVLG. Residues 465–479 show a composition bias toward polar residues; the sequence is RPTSHTPTGTANDNI. Residues 543–825 enclose the ASD2 domain; sequence EELVQELARL…QLDAIRDDLG (283 aa). A compositionally biased stretch (pro residues) spans 830 to 852; sequence SPSPARPPGTCPPVQPPFPLLLT.

This sequence belongs to the shroom family. Interacts with F-actin.

Its subcellular location is the cytoplasm. The protein resides in the cytoskeleton. Functionally, may be involved in the assembly of microtubule arrays during cell elongation. The protein is Protein Shroom1 (SHROOM1) of Homo sapiens (Human).